Consider the following 312-residue polypeptide: MSQYQQGYGDQTRRVDEYGNPLTSQGQVDQYGNPISGGGMTGATGHGHGHHQQHHGVGVDQTTGFGSNTGTGTGYGTHTGSGGTHTGGVGGYGTTTEYGSTNTGSGYGNTDIGGTGYGTGTGTGTTGYGATGGGTGVGYGGTGHDNRGVMDKIKEKIPGTDQNASTYGTGTGYGTTGIGHQQHGGDNRGVMDKIKEKIPGTDQNQYTHGTGTGTGTGYGTTGYGASGVGHQQHGEKGVMDKIKEKIPGTEQNTYGTGTGTGHGTTGYGSTGTGHGTTGYGDEQHHGEKKGIMEKIKEKLPGTGSCTGHGQGH.

Disordered stretches follow at residues 1–88 (MSQY…HTGG) and 248–287 (GTEQ…HHGE). Over residues 21–30 (PLTSQGQVDQ) the composition is skewed to polar residues. Residues 35–46 (ISGGGMTGATGH) are compositionally biased toward gly residues. Low complexity predominate over residues 55–66 (HGVGVDQTTGFG). Composition is skewed to gly residues over residues 67–88 (SNTG…HTGG) and 256–278 (TGTG…GTTG).

Belongs to the plant dehydrin family. As to quaternary structure, interacts with the leghemoglobin LB120-1 in the cytoplasm; this interaction leads to LB120-1 protection from denaturation under thermal and drought stresses. Expressed in nodules and roots.

It localises to the cytoplasm. Its function is as follows. Intrinsically disordered protein acting as a chaperone. Ensures leghemoglobins (e.g. LB120-1) protection from denaturation under thermal and drought stresses to delay root nodule nitrogenase inactivation and subsequent nodule senescence, thus supporting symbiotic nitrogen fixation (SNF). The protein is Dehydrin CAS31 of Medicago truncatula (Barrel medic).